Reading from the N-terminus, the 359-residue chain is S-adenosylmethionine-dependent nucleotide dehydratase RSAD2 (359 aa).

The segment at 43–67 (QTPARKISRPESRTSKQKEGSRAPF) is disordered. Residues 50–63 (SRPESRTSKQKEGS) are compositionally biased toward basic and acidic residues. The Radical SAM core domain maps to 67–287 (FTTPSSVNYH…LERHQSIQCL (221 aa)). Positions 81, 85, and 88 each coordinate [4Fe-4S] cluster.

It belongs to the radical SAM superfamily. RSAD2 family. [4Fe-4S] cluster serves as cofactor.

The protein localises to the endoplasmic reticulum membrane. Functionally, interferon-inducible iron-sulfur (4FE-4S) cluster-binding antiviral protein which plays a major role in the cell antiviral state induced by type I and type II interferon. In Danio rerio (Zebrafish), this protein is S-adenosylmethionine-dependent nucleotide dehydratase RSAD2.